Reading from the N-terminus, the 123-residue chain is uncharacterized protein (123 aa).

Residues 35–100 (SQDHGDDPAE…SSGAPASQHC (66 aa)) are disordered. Over residues 37–48 (DHGDDPAERGRT) the composition is skewed to basic and acidic residues. Positions 85–97 (ALPASPSSGAPAS) are enriched in low complexity.

This is an uncharacterized protein from Homo sapiens (Human).